The chain runs to 164 residues: Disulfide bond formation protein B (164 aa).

Over 1–9 (MTLPSARTC) the chain is Cytoplasmic. The helical transmembrane segment at 10-26 (FLLGFLFCAALLAAALY) threads the bilayer. Topologically, residues 27 to 44 (FQFSGGLEPCPLCISQRI) are periplasmic. The cysteines at positions 36 and 39 are disulfide-linked. The chain crosses the membrane as a helical span at residues 45-61 (MVLAVALVFLAAAIHHP). Topologically, residues 62–68 (ASLGIRA) are cytoplasmic. Residues 69–85 (YALLGTAVALGGASISG) traverse the membrane as a helical segment. Residues 86–142 (RHVWLLHLPPEEVPECGPGLSYMFRNFPLGDTLKAMLSGTGDCAKVDWTFLGLSMPA) are Periplasmic-facing. Cysteine 101 and cysteine 128 are joined by a disulfide. A helical transmembrane segment spans residues 143 to 161 (WVLICFLGLGAFSLLQWWN). At 162–164 (AER) the chain is on the cytoplasmic side.

The protein belongs to the DsbB family.

It localises to the cell inner membrane. Functionally, required for disulfide bond formation in some periplasmic proteins. Acts by oxidizing the DsbA protein. This Methylococcus capsulatus (strain ATCC 33009 / NCIMB 11132 / Bath) protein is Disulfide bond formation protein B.